A 207-amino-acid polypeptide reads, in one-letter code: dITP/XTP pyrophosphatase (207 aa).

11–16 (TGNPGK) serves as a coordination point for substrate. Residue D72 is the Proton acceptor of the active site. D72 provides a ligand contact to Mg(2+). Substrate-binding positions include S73, 154 to 157 (FGYD), K177, and 182 to 183 (HR).

This sequence belongs to the HAM1 NTPase family. Homodimer. Mg(2+) serves as cofactor.

The catalysed reaction is XTP + H2O = XMP + diphosphate + H(+). It carries out the reaction dITP + H2O = dIMP + diphosphate + H(+). The enzyme catalyses ITP + H2O = IMP + diphosphate + H(+). Pyrophosphatase that catalyzes the hydrolysis of nucleoside triphosphates to their monophosphate derivatives, with a high preference for the non-canonical purine nucleotides XTP (xanthosine triphosphate), dITP (deoxyinosine triphosphate) and ITP. Seems to function as a house-cleaning enzyme that removes non-canonical purine nucleotides from the nucleotide pool, thus preventing their incorporation into DNA/RNA and avoiding chromosomal lesions. This chain is dITP/XTP pyrophosphatase, found in Thermus thermophilus (strain ATCC BAA-163 / DSM 7039 / HB27).